The primary structure comprises 223 residues: Glycoprotein 42 (223 aa).

The Intravirion segment spans residues 1–8 (MVSFKQVR). The helical transmembrane segment at 9-29 (VPLFTAIALVIVLLLAYFLPP) threads the bilayer. The Virion surface segment spans residues 30-223 (RVRGGGRVAA…CLCVSQRSNS (194 aa)). Disulfide bonds link cysteine 99/cysteine 138, cysteine 102/cysteine 115, cysteine 128/cysteine 214, cysteine 132/cysteine 216, and cysteine 192/cysteine 208. The C-type lectin domain occupies 111-217 (YKGCCFYFTK…CSFLKPCLCV (107 aa)).

This sequence belongs to the epstein barr virus gp42 family. In terms of assembly, forms a complex with gp25 and gp85 via its N-terminus; this complex is used for invasion of B-lymphocytes. Interacts with human HLA-DRA and HLA-DRB1.

It is found in the virion membrane. The protein localises to the host membrane. Its function is as follows. Plays a role in virion attachment to host B-lymphocytes, through binding to leukocyte antigen (HLA) class II and subsequently participates in fusion of the virion with host membranes. May act as a tropism switch that directs fusion with B-lymphocytes and inhibits fusion with epithelial cells. Additionally, hampers T-cell recognition via HLA class II molecules through steric hindrance of T-cell receptor-class II-peptide interaction. In terms of biological role, soluble gp42 inhibits HLA class II-restricted antigen presentation to T-cells through binding to immature and mature HLA class II complexes. This chain is Glycoprotein 42, found in Epstein-Barr virus (strain B95-8) (HHV-4).